A 778-amino-acid polypeptide reads, in one-letter code: Ribonucleoside-diphosphate reductase large subunit (778 aa).

Substrate is bound by residues Ser177, 192–193 (SC), Gly221, 419–423 (NLCIE), and 613–617 (PTATS). The cysteines at positions 193 and 439 are disulfide-linked. Asn419 serves as the catalytic Proton acceptor. Cys421 acts as the Cysteine radical intermediate in catalysis. Residue Glu423 is the Proton acceptor of the active site.

This sequence belongs to the ribonucleoside diphosphate reductase large chain family. Heterotetramer composed of a homodimer of the large subunit (R1) and a homodimer of the small subunit (R2). Larger multisubunit protein complex are also active, composed of (R1)n(R2)n.

The catalysed reaction is a 2'-deoxyribonucleoside 5'-diphosphate + [thioredoxin]-disulfide + H2O = a ribonucleoside 5'-diphosphate + [thioredoxin]-dithiol. Under complex allosteric control mediated by deoxynucleoside triphosphates and ATP binding. The type of nucleotide bound at the specificity site determines substrate preference. It seems probable that ATP makes the enzyme reduce CDP and UDP, dGTP favors ADP reduction and dTTP favors GDP reduction. Its function is as follows. Ribonucleoside-diphosphate reductase holoenzyme provides the precursors necessary for viral DNA synthesis. Allows virus growth in non-dividing cells. Catalyzes the biosynthesis of deoxyribonucleotides from the corresponding ribonucleotides. This Ornithodoros (relapsing fever ticks) protein is Ribonucleoside-diphosphate reductase large subunit.